Here is a 75-residue protein sequence, read N- to C-terminus: Anionic peptide (75 aa).

Residues methionine 1–alanine 24 form the signal peptide.

The protein belongs to the non-disulfide-bridged peptide (NDBP) superfamily. In terms of tissue distribution, expressed by the venom gland.

Its subcellular location is the secreted. The sequence is that of Anionic peptide from Tityus discrepans (Venezuelan scorpion).